A 116-amino-acid polypeptide reads, in one-letter code: Large ribosomal subunit protein bL17 (116 aa).

Belongs to the bacterial ribosomal protein bL17 family. Part of the 50S ribosomal subunit. Contacts protein L32.

This chain is Large ribosomal subunit protein bL17, found in Acaryochloris marina (strain MBIC 11017).